Reading from the N-terminus, the 102-residue chain is UPF0213 protein Ent638_3592 (102 aa).

In terms of domain architecture, GIY-YIG spans 4-79 (VCWFLYLVRT…KQLTKRQKER (76 aa)).

This sequence belongs to the UPF0213 family.

This chain is UPF0213 protein Ent638_3592, found in Enterobacter sp. (strain 638).